Consider the following 328-residue polypeptide: D-cysteine desulfhydrase (328 aa).

Lysine 51 is subject to N6-(pyridoxal phosphate)lysine.

This sequence belongs to the ACC deaminase/D-cysteine desulfhydrase family. In terms of assembly, homodimer. Pyridoxal 5'-phosphate serves as cofactor.

It carries out the reaction D-cysteine + H2O = hydrogen sulfide + pyruvate + NH4(+) + H(+). Functionally, catalyzes the alpha,beta-elimination reaction of D-cysteine and of several D-cysteine derivatives. It could be a defense mechanism against D-cysteine. The polypeptide is D-cysteine desulfhydrase (Salmonella choleraesuis (strain SC-B67)).